The primary structure comprises 124 residues: Small ribosomal subunit protein uS12 (124 aa).

Asp-89 carries the 3-methylthioaspartic acid modification.

The protein belongs to the universal ribosomal protein uS12 family. As to quaternary structure, part of the 30S ribosomal subunit. Contacts proteins S8 and S17. May interact with IF1 in the 30S initiation complex.

Its function is as follows. With S4 and S5 plays an important role in translational accuracy. Interacts with and stabilizes bases of the 16S rRNA that are involved in tRNA selection in the A site and with the mRNA backbone. Located at the interface of the 30S and 50S subunits, it traverses the body of the 30S subunit contacting proteins on the other side and probably holding the rRNA structure together. The combined cluster of proteins S8, S12 and S17 appears to hold together the shoulder and platform of the 30S subunit. In Shewanella sediminis (strain HAW-EB3), this protein is Small ribosomal subunit protein uS12.